A 719-amino-acid polypeptide reads, in one-letter code: Protein borderless (719 aa).

An N-terminal signal peptide occupies residues 1-33; the sequence is MPAKRSRTFRQSGSALLALLAIILLMNISCTSA. Topologically, residues 34–650 are extracellular; sequence ARDHRRQTNL…IDVPSQRKVR (617 aa). 4 consecutive Ig-like domains span residues 40 to 128, 134 to 241, 246 to 334, and 341 to 429; these read QTNL…CQVS, PSVR…AFLN, AKVI…PVIS, and PIFS…AELM. 4 cysteine pairs are disulfide-bonded: Cys55-Cys125, Cys172-Cys224, Cys267-Cys318, and Cys363-Cys413. 2 Fibronectin type-III domains span residues 434-527 and 555-646; these read APRA…TLPS and APWN…VPSQ. The helical transmembrane segment at 651–671 threads the bilayer; sequence ALIIGSSVGVIFLLCALCAFL. The Cytoplasmic segment spans residues 672 to 719; the sequence is YVKRSCLRHLFAKDSSASEDEDTAESGDCDSDEQDQRDRDSIKIRQST. The tract at residues 685–719 is disordered; that stretch reads DSSASEDEDTAESGDCDSDEQDQRDRDSIKIRQST. Positions 688-704 are enriched in acidic residues; it reads ASEDEDTAESGDCDSDE. Basic and acidic residues predominate over residues 705–719; that stretch reads QDQRDRDSIKIRQST.

This sequence belongs to the immunoglobulin superfamily. As to quaternary structure, interacts with tutl. As to expression, in the visual system, expressed in lamina and medulla (at protein level).

Its subcellular location is the cell membrane. It localises to the cell projection. The protein localises to the axon. Its function is as follows. In the developing eye, has a role in axonal targeting of the R7 photoreceptor where it functions together with tutl. Probably mediates homotypic cell adhesion; the effect is inhibited by Lar. The polypeptide is Protein borderless (Drosophila melanogaster (Fruit fly)).